Here is a 127-residue protein sequence, read N- to C-terminus: Small ribosomal subunit protein uS11 (127 aa).

Belongs to the universal ribosomal protein uS11 family. Part of the 30S ribosomal subunit. Interacts with proteins S7 and S18. Binds to IF-3.

Located on the platform of the 30S subunit, it bridges several disparate RNA helices of the 16S rRNA. Forms part of the Shine-Dalgarno cleft in the 70S ribosome. The polypeptide is Small ribosomal subunit protein uS11 (Rickettsia rickettsii (strain Iowa)).